Here is a 733-residue protein sequence, read N- to C-terminus: 1,4-alpha-glucan branching enzyme GlgB (733 aa).

Residue Asp412 is the Nucleophile of the active site. Glu467 (proton donor) is an active-site residue.

The protein belongs to the glycosyl hydrolase 13 family. GlgB subfamily. Monomer.

It catalyses the reaction Transfers a segment of a (1-&gt;4)-alpha-D-glucan chain to a primary hydroxy group in a similar glucan chain.. Its pathway is glycan biosynthesis; glycogen biosynthesis. In terms of biological role, catalyzes the formation of the alpha-1,6-glucosidic linkages in glycogen by scission of a 1,4-alpha-linked oligosaccharide from growing alpha-1,4-glucan chains and the subsequent attachment of the oligosaccharide to the alpha-1,6 position. In Burkholderia vietnamiensis (strain G4 / LMG 22486) (Burkholderia cepacia (strain R1808)), this protein is 1,4-alpha-glucan branching enzyme GlgB.